A 627-amino-acid chain; its full sequence is Carene synthase, chloroplastic (627 aa).

A chloroplast-targeting transit peptide spans 1–36 (MSVISIMPLASKPCLNKSFISSTHEPKALRRPISTV). Mg(2+)-binding residues include Asp-378, Asp-382, and Asp-530. The DDXXD motif motif lies at 378–382 (DDMYD).

The protein belongs to the terpene synthase family. Tpsd subfamily. The cofactor is Mg(2+). Mn(2+) is required as a cofactor.

It is found in the plastid. The protein localises to the chloroplast. It carries out the reaction (2E)-geranyl diphosphate = (+)-car-3-ene + diphosphate. The protein operates within terpene metabolism; oleoresin biosynthesis. In terms of biological role, terpene synthase (TPS) involved in defensive oleoresin formation in conifers in response to insect attack or other injury. This is Carene synthase, chloroplastic (3CAR) from Picea glauca (White spruce).